Here is a 307-residue protein sequence, read N- to C-terminus: Branched-chain-amino-acid aminotransferase (307 aa).

An N6-(pyridoxal phosphate)lysine modification is found at Lys160.

It belongs to the class-IV pyridoxal-phosphate-dependent aminotransferase family. Pyridoxal 5'-phosphate serves as cofactor.

It catalyses the reaction L-leucine + 2-oxoglutarate = 4-methyl-2-oxopentanoate + L-glutamate. The catalysed reaction is L-isoleucine + 2-oxoglutarate = (S)-3-methyl-2-oxopentanoate + L-glutamate. The enzyme catalyses L-valine + 2-oxoglutarate = 3-methyl-2-oxobutanoate + L-glutamate. It functions in the pathway amino-acid biosynthesis; L-isoleucine biosynthesis; L-isoleucine from 2-oxobutanoate: step 4/4. Its pathway is amino-acid biosynthesis; L-leucine biosynthesis; L-leucine from 3-methyl-2-oxobutanoate: step 4/4. The protein operates within amino-acid biosynthesis; L-valine biosynthesis; L-valine from pyruvate: step 4/4. Acts on leucine, isoleucine and valine. This Pseudomonas aeruginosa (strain ATCC 15692 / DSM 22644 / CIP 104116 / JCM 14847 / LMG 12228 / 1C / PRS 101 / PAO1) protein is Branched-chain-amino-acid aminotransferase (ilvE).